The following is a 132-amino-acid chain: uncharacterized protein (132 aa).

The region spanning 45-115 (VHMEKHKLKI…VVIVTTAEGK (71 aa)) is the BIG2 domain.

To B.anthracis BA1245.

This is an uncharacterized protein from Bacillus cereus (strain ATCC 14579 / DSM 31 / CCUG 7414 / JCM 2152 / NBRC 15305 / NCIMB 9373 / NCTC 2599 / NRRL B-3711).